Reading from the N-terminus, the 83-residue chain is Translational regulator CsrA (83 aa).

The protein belongs to the CsrA/RsmA family. Homodimer; the beta-strands of each monomer intercalate to form a hydrophobic core, while the alpha-helices form wings that extend away from the core.

It is found in the cytoplasm. Functionally, a translational regulator that binds mRNA to regulate translation initiation and/or mRNA stability. Usually binds in the 5'-UTR at or near the Shine-Dalgarno sequence preventing ribosome-binding, thus repressing translation. Its main target seems to be the major flagellin gene, while its function is anatagonized by FliW. This chain is Translational regulator CsrA, found in Nocardioides sp. (strain ATCC BAA-499 / JS614).